The sequence spans 257 residues: 2,3,4,5-tetrahydropyridine-2,6-dicarboxylate N-acetyltransferase (257 aa).

This sequence belongs to the transferase hexapeptide repeat family. DapH subfamily.

It catalyses the reaction (S)-2,3,4,5-tetrahydrodipicolinate + acetyl-CoA + H2O = L-2-acetamido-6-oxoheptanedioate + CoA. The protein operates within amino-acid biosynthesis; L-lysine biosynthesis via DAP pathway; LL-2,6-diaminopimelate from (S)-tetrahydrodipicolinate (acetylase route): step 1/3. Its function is as follows. Catalyzes the transfer of an acetyl group from acetyl-CoA to tetrahydrodipicolinate. The polypeptide is 2,3,4,5-tetrahydropyridine-2,6-dicarboxylate N-acetyltransferase (Lactococcus lactis subsp. cremoris (strain SK11)).